The chain runs to 70 residues: Small ribosomal subunit protein bS21 (70 aa).

Belongs to the bacterial ribosomal protein bS21 family.

The polypeptide is Small ribosomal subunit protein bS21 (Nitratiruptor sp. (strain SB155-2)).